The chain runs to 399 residues: Phosphoglycerate kinase (399 aa).

Substrate is bound by residues Asp-21 to Asn-23, Arg-37, His-60 to Arg-63, Arg-119, and Arg-152. Residues Lys-205, Gly-296, Glu-327, and Gly-353–Thr-356 each bind ATP.

It belongs to the phosphoglycerate kinase family. Monomer.

It localises to the cytoplasm. It carries out the reaction (2R)-3-phosphoglycerate + ATP = (2R)-3-phospho-glyceroyl phosphate + ADP. The protein operates within carbohydrate degradation; glycolysis; pyruvate from D-glyceraldehyde 3-phosphate: step 2/5. This chain is Phosphoglycerate kinase, found in Sulfurimonas denitrificans (strain ATCC 33889 / DSM 1251) (Thiomicrospira denitrificans (strain ATCC 33889 / DSM 1251)).